The chain runs to 330 residues: GTPase Obg (330 aa).

Residues 1–159 enclose the Obg domain; it reads MHFIDEVKIY…MWIHLSLKLL (159 aa). Residues 160–327 enclose the OBG-type G domain; the sequence is SDVGLVGLPN…IVKLALETIK (168 aa). GTP is bound by residues 166 to 173, 191 to 195, 212 to 215, 279 to 282, and 308 to 310; these read GLPNAGKS, FTTLV, DIPG, NKCD, and STC. 2 residues coordinate Mg(2+): Ser173 and Thr193.

The protein belongs to the TRAFAC class OBG-HflX-like GTPase superfamily. OBG GTPase family. As to quaternary structure, monomer. The cofactor is Mg(2+).

The protein localises to the cytoplasm. An essential GTPase which binds GTP, GDP and possibly (p)ppGpp with moderate affinity, with high nucleotide exchange rates and a fairly low GTP hydrolysis rate. Plays a role in control of the cell cycle, stress response, ribosome biogenesis and in those bacteria that undergo differentiation, in morphogenesis control. The protein is GTPase Obg of Rickettsia conorii (strain ATCC VR-613 / Malish 7).